Consider the following 556-residue polypeptide: Oxygen-dependent choline dehydrogenase (556 aa).

Position 4-33 (4-33) interacts with FAD; it reads DYIIIGAGSAGNVLATRLTEDPNTSVLLLE. The active-site Proton acceptor is the His-473.

It belongs to the GMC oxidoreductase family. It depends on FAD as a cofactor.

It catalyses the reaction choline + A = betaine aldehyde + AH2. The enzyme catalyses betaine aldehyde + NAD(+) + H2O = glycine betaine + NADH + 2 H(+). Its pathway is amine and polyamine biosynthesis; betaine biosynthesis via choline pathway; betaine aldehyde from choline (cytochrome c reductase route): step 1/1. In terms of biological role, involved in the biosynthesis of the osmoprotectant glycine betaine. Catalyzes the oxidation of choline to betaine aldehyde and betaine aldehyde to glycine betaine at the same rate. The chain is Oxygen-dependent choline dehydrogenase from Shigella flexneri serotype 5b (strain 8401).